Consider the following 117-residue polypeptide: Large ribosomal subunit protein uL18 (117 aa).

The protein belongs to the universal ribosomal protein uL18 family. In terms of assembly, part of the 50S ribosomal subunit; part of the 5S rRNA/L5/L18/L25 subcomplex. Contacts the 5S and 23S rRNAs.

In terms of biological role, this is one of the proteins that bind and probably mediate the attachment of the 5S RNA into the large ribosomal subunit, where it forms part of the central protuberance. The chain is Large ribosomal subunit protein uL18 from Francisella tularensis subsp. novicida (strain U112).